A 459-amino-acid chain; its full sequence is Vacuolar amino acid transporter 5 (459 aa).

8 consecutive transmembrane segments (helical) span residues 8-28 (GVLT…PFAF), 33-53 (LMPG…GLLL), 82-102 (VVFD…YLII), 131-151 (FLDR…PLCF), 161-181 (ASMI…YHFV), 206-226 (LTTL…FSVI), 240-260 (IPIF…GTGY), and 278-298 (SIST…AFPL). Residues 335–351 (FNSEDPQEAPTQQNNEE) show a composition bias toward polar residues. The disordered stretch occupies residues 335-354 (FNSEDPQEAPTQQNNEEPNL). The next 3 membrane-spanning stretches (helical) occupy residues 364–384 (IITL…TSLA), 386–406 (VLAI…PGLF), and 434–454 (LSLF…IVFL).

The protein belongs to the amino acid/polyamine transporter 2 family.

It is found in the vacuole membrane. Functionally, probable amino acid transporter of unknown specificity. The protein is Vacuolar amino acid transporter 5 (AVT5) of Saccharomyces cerevisiae (strain ATCC 204508 / S288c) (Baker's yeast).